The sequence spans 243 residues: Uridylate kinase (243 aa).

12 to 15 (KLSG) lines the ATP pocket. Glycine 54 contributes to the UMP binding site. ATP-binding residues include glycine 55 and arginine 59. Position 135 to 142 (135 to 142 (TGNPYFTT)) interacts with UMP. 3 residues coordinate ATP: asparagine 163, tyrosine 169, and aspartate 172.

Belongs to the UMP kinase family. As to quaternary structure, homohexamer.

Its subcellular location is the cytoplasm. The catalysed reaction is UMP + ATP = UDP + ADP. Its pathway is pyrimidine metabolism; CTP biosynthesis via de novo pathway; UDP from UMP (UMPK route): step 1/1. Its activity is regulated as follows. Inhibited by UTP. In terms of biological role, catalyzes the reversible phosphorylation of UMP to UDP. The protein is Uridylate kinase of Roseiflexus sp. (strain RS-1).